Reading from the N-terminus, the 181-residue chain is tRNA-splicing endonuclease (181 aa).

Catalysis depends on residues Y118, H126, and K157.

This sequence belongs to the tRNA-intron endonuclease family. Archaeal short subfamily. Homotetramer; although the tetramer contains four active sites, only two participate in the cleavage. Therefore, it should be considered as a dimer of dimers.

It catalyses the reaction pretRNA = a 3'-half-tRNA molecule with a 5'-OH end + a 5'-half-tRNA molecule with a 2',3'-cyclic phosphate end + an intron with a 2',3'-cyclic phosphate and a 5'-hydroxyl terminus.. Endonuclease that removes tRNA introns. Cleaves pre-tRNA at the 5'- and 3'-splice sites to release the intron. The products are an intron and two tRNA half-molecules bearing 2',3' cyclic phosphate and 5'-OH termini. Recognizes a pseudosymmetric substrate in which 2 bulged loops of 3 bases are separated by a stem of 4 bp. This chain is tRNA-splicing endonuclease, found in Hyperthermus butylicus (strain DSM 5456 / JCM 9403 / PLM1-5).